We begin with the raw amino-acid sequence, 1554 residues long: Lysine-specific demethylase 5C (1554 aa).

The 42-residue stretch at 14-55 folds into the JmjN domain; sequence CPVFEPSWAEFRDPLGYIAKIRPIAEKSGICKIRPPADWQPP. In terms of domain architecture, ARID spans 79–169; sequence TRVKLNYLDQ…IVYPYEMYQS (91 aa). The span at 197–207 shows a compositional bias: polar residues; sequence LRQSVQPSKFN. Residues 197–227 form a disordered region; the sequence is LRQSVQPSKFNSYGRRAKRLQPDPEPTEEDI. Glycyl lysine isopeptide (Lys-Gly) (interchain with G-Cter in SUMO2) cross-links involve residues K205, K229, K244, and K274. The segment at 284-303 is disordered; the sequence is ESTSPKTFLEGKEELSHSPE. A Phosphoserine modification is found at S287. K295 participates in a covalent cross-link: Glycyl lysine isopeptide (Lys-Gly) (interchain with G-Cter in SUMO2). Phosphoserine occurs at positions 301 and 317. Residues 326–372 form a PHD-type 1 zinc finger; sequence VCRMCSRGDEDDKLLLCDGCDDNYHIFCLLPPLPEIPKGVWRCPKCV. Residues 468–634 form the JmjC domain; it reads EYATSGWNLN…AGRQCIEHYR (167 aa). Fe cation-binding residues include H514, D517, and H602. Phosphoserine occurs at positions 893 and 897. K1127 is covalently cross-linked (Glycyl lysine isopeptide (Lys-Gly) (interchain with G-Cter in SUMO2)). The PHD-type 2 zinc-finger motif lies at 1187 to 1248; it reads ICVCGQVPAG…DTKFLCPLCM (62 aa). 2 disordered regions span residues 1319–1364 and 1437–1535; these read SKPE…EGSG and AERH…APFS. Position 1353 is a phosphoserine (S1353). A compositionally biased stretch (basic residues) spans 1442 to 1457; that stretch reads SRTRGRALERRRRRKV. Over residues 1458–1475 the composition is skewed to basic and acidic residues; the sequence is DRGGEPDDPAREELEPKR. Acidic residues predominate over residues 1482-1497; the sequence is EAEEVQEEEELEEETG.

The protein belongs to the JARID1 histone demethylase family. Part of two distinct complexes, one containing E2F6, and the other containing REST. Interacts with ZMYND8. Fe(2+) is required as a cofactor.

It is found in the nucleus. It catalyses the reaction N(6),N(6),N(6)-trimethyl-L-lysyl(4)-[histone H3] + 3 2-oxoglutarate + 3 O2 = L-lysyl(4)-[histone H3] + 3 formaldehyde + 3 succinate + 3 CO2. Functionally, histone demethylase that specifically demethylates 'Lys-4' of histone H3, thereby playing a central role in histone code. Does not demethylate histone H3 'Lys-9', H3 'Lys-27', H3 'Lys-36', H3 'Lys-79' or H4 'Lys-20'. Demethylates trimethylated and dimethylated but not monomethylated H3 'Lys-4'. Participates in transcriptional repression of neuronal genes by recruiting histone deacetylases and REST at neuron-restrictive silencer elements. Represses the CLOCK-BMAL1 heterodimer-mediated transcriptional activation of the core clock component PER2. The chain is Lysine-specific demethylase 5C (Kdm5c) from Mus musculus (Mouse).